Consider the following 163-residue polypeptide: Ankyrin repeat domain-containing protein 37 (163 aa).

ANK repeat units lie at residues leucine 29–glutamine 58, phenylalanine 62–methionine 91, and aspartate 95–threonine 124. Positions glutamine 129–glutamine 149 match the Nuclear localization signal motif.

It localises to the nucleus. The protein resides in the cytoplasm. This chain is Ankyrin repeat domain-containing protein 37 (ankrd37), found in Xenopus tropicalis (Western clawed frog).